Reading from the N-terminus, the 300-residue chain is Tyrosine phosphatase-like protein J1 (300 aa).

A Tyrosine-protein phosphatase domain is found at 27–294 (LKREHEHIMQ…IFCYFTVLQF (268 aa)).

The protein belongs to the protein-tyrosine phosphatase family.

This is Tyrosine phosphatase-like protein J1 (J1) from Microplitis demolitor (Parasitoid wasp).